Consider the following 196-residue polypeptide: Peptidyl-tRNA hydrolase (196 aa).

Y14 is a tRNA binding site. H19 serves as the catalytic Proton acceptor. TRNA-binding residues include Y64, N66, and N112.

The protein belongs to the PTH family. As to quaternary structure, monomer.

Its subcellular location is the cytoplasm. It catalyses the reaction an N-acyl-L-alpha-aminoacyl-tRNA + H2O = an N-acyl-L-amino acid + a tRNA + H(+). Hydrolyzes ribosome-free peptidyl-tRNAs (with 1 or more amino acids incorporated), which drop off the ribosome during protein synthesis, or as a result of ribosome stalling. In terms of biological role, catalyzes the release of premature peptidyl moieties from peptidyl-tRNA molecules trapped in stalled 50S ribosomal subunits, and thus maintains levels of free tRNAs and 50S ribosomes. The protein is Peptidyl-tRNA hydrolase of Methylocella silvestris (strain DSM 15510 / CIP 108128 / LMG 27833 / NCIMB 13906 / BL2).